Consider the following 340-residue polypeptide: Glycerol-3-phosphate dehydrogenase [NAD(P)+] (340 aa).

Positions 11, 12, 33, and 106 each coordinate NADPH. Sn-glycerol 3-phosphate-binding residues include lysine 106, glycine 137, and serine 139. NADPH is bound at residue alanine 141. The sn-glycerol 3-phosphate site is built by lysine 192, aspartate 245, serine 255, arginine 256, and asparagine 257. Lysine 192 (proton acceptor) is an active-site residue. Position 256 (arginine 256) interacts with NADPH. Valine 280 and glutamate 282 together coordinate NADPH.

This sequence belongs to the NAD-dependent glycerol-3-phosphate dehydrogenase family.

The protein localises to the cytoplasm. It carries out the reaction sn-glycerol 3-phosphate + NAD(+) = dihydroxyacetone phosphate + NADH + H(+). The catalysed reaction is sn-glycerol 3-phosphate + NADP(+) = dihydroxyacetone phosphate + NADPH + H(+). It functions in the pathway membrane lipid metabolism; glycerophospholipid metabolism. In terms of biological role, catalyzes the reduction of the glycolytic intermediate dihydroxyacetone phosphate (DHAP) to sn-glycerol 3-phosphate (G3P), the key precursor for phospholipid synthesis. The polypeptide is Glycerol-3-phosphate dehydrogenase [NAD(P)+] (Bacillus anthracis (strain A0248)).